A 620-amino-acid polypeptide reads, in one-letter code: DNA mismatch repair protein MutL (620 aa).

Positions 332 to 402 (SELGLEAQPE…YRTPLRPATH (71 aa)) are disordered. Residues 352–365 (SNSTNSNVSSTSYS) show a composition bias toward low complexity. The segment covering 378 to 394 (PLTTTATSYNQGQSSYR) has biased composition (polar residues).

This sequence belongs to the DNA mismatch repair MutL/HexB family.

In terms of biological role, this protein is involved in the repair of mismatches in DNA. It is required for dam-dependent methyl-directed DNA mismatch repair. May act as a 'molecular matchmaker', a protein that promotes the formation of a stable complex between two or more DNA-binding proteins in an ATP-dependent manner without itself being part of a final effector complex. The protein is DNA mismatch repair protein MutL of Shewanella piezotolerans (strain WP3 / JCM 13877).